The chain runs to 460 residues: Pyruvate dehydrogenase E1 component subunit beta (460 aa).

The 77-residue stretch at 2–78 (PVEILMPALS…KVNTPIAVLL (77 aa)) folds into the Lipoyl-binding domain. An N6-lipoyllysine modification is found at Lys43. The disordered stretch occupies residues 91 to 131 (KTEAPKAETPKPAAAEAPAASAAPVAAQPKADVPSDPAIPA). The segment covering 100 to 121 (PKPAAAEAPAASAAPVAAQPKA) has biased composition (low complexity). Thiamine diphosphate is bound at residue Glu194.

In terms of assembly, heterodimer of an alpha and a beta chain. Requires (R)-lipoate as cofactor. It depends on thiamine diphosphate as a cofactor.

The enzyme catalyses N(6)-[(R)-lipoyl]-L-lysyl-[protein] + pyruvate + H(+) = N(6)-[(R)-S(8)-acetyldihydrolipoyl]-L-lysyl-[protein] + CO2. The pyruvate dehydrogenase complex catalyzes the overall conversion of pyruvate to acetyl-CoA and CO(2). It contains multiple copies of three enzymatic components: pyruvate dehydrogenase (E1), dihydrolipoamide acetyltransferase (E2) and lipoamide dehydrogenase (E3). This chain is Pyruvate dehydrogenase E1 component subunit beta (pdhB), found in Rhizobium meliloti (strain 1021) (Ensifer meliloti).